The chain runs to 136 residues: Protein NrdI (136 aa).

It belongs to the NrdI family.

In terms of biological role, probably involved in ribonucleotide reductase function. The chain is Protein NrdI from Salmonella dublin (strain CT_02021853).